A 373-amino-acid chain; its full sequence is Ras association domain-containing protein 7 (373 aa).

One can recognise a Ras-associating domain in the interval 6–89 (AAMELKVWVD…VQFVLRRTGP (84 aa)). Positions 122–150 (CEPRKTLTPEPAPSLSRPGPAAPVTPTPG) are disordered. Coiled-coil stretches lie at residues 175–227 (WEQE…AAEA) and 248–297 (QERQ…QFIQ). A disordered region spans residues 300-356 (GAALPPPPRPDRGPPGTQGPLPPAREESLLGAPSESHAGAQPRPRGGPHDAELLEVA).

Interacts with MAP2K7 and GTP-bound NRAS. Post-translationally, polyubiquitinated and degraded by the proteasome upon prolonged stress stimuli.

The protein resides in the cytoplasm. The protein localises to the cytoskeleton. It localises to the microtubule organizing center. It is found in the centrosome. Its function is as follows. Negatively regulates stress-induced JNK activation and apoptosis by promoting MAP2K7 phosphorylation and inhibiting its ability to activate JNK. Following prolonged stress, anti-apoptotic effect stops because of degradation of RASSF7 protein via the ubiquitin-proteasome pathway. Required for the activation of AURKB and chromosomal congression during mitosis where it stimulates microtubule polymerization. The chain is Ras association domain-containing protein 7 (RASSF7) from Homo sapiens (Human).